Here is a 147-residue protein sequence, read N- to C-terminus: Ribosomal RNA large subunit methyltransferase H (147 aa).

Residues L66, G95, and 114–119 each bind S-adenosyl-L-methionine; that span reads LSELTF.

The protein belongs to the RNA methyltransferase RlmH family. In terms of assembly, homodimer.

The protein resides in the cytoplasm. It catalyses the reaction pseudouridine(1915) in 23S rRNA + S-adenosyl-L-methionine = N(3)-methylpseudouridine(1915) in 23S rRNA + S-adenosyl-L-homocysteine + H(+). Specifically methylates the pseudouridine at position 1915 (m3Psi1915) in 23S rRNA. The polypeptide is Ribosomal RNA large subunit methyltransferase H (Synechococcus sp. (strain RCC307)).